The primary structure comprises 372 residues: Probable basic-leucine zipper transcription factor G (372 aa).

Disordered regions lie at residues 1 to 20 (MLSV…QQQQ) and 176 to 234 (TTNN…EKFE). 2 stretches are compositionally biased toward low complexity: residues 11–20 (QQPQQQQQQQ) and 176–215 (TTNN…KSNT). A compositionally biased stretch (polar residues) spans 223–234 (IRNSNSTFEKFE). Positions 277 to 340 (ELKRQKRLIK…LILKAEVGQL (64 aa)) constitute a bZIP domain. A basic motif region spans residues 279 to 301 (KRQKRLIKNRESAHLSRQRKRER). The leucine-zipper stretch occupies residues 305-340 (LEHRVEELSSNSIDINKTLSSLENENLILKAEVGQL).

The protein belongs to the bZIP family.

Its subcellular location is the nucleus. Functionally, probable transcriptional regulator. The polypeptide is Probable basic-leucine zipper transcription factor G (bzpG) (Dictyostelium discoideum (Social amoeba)).